Here is a 213-residue protein sequence, read N- to C-terminus: Large ribosomal subunit protein uL1 (213 aa).

The protein belongs to the universal ribosomal protein uL1 family. As to quaternary structure, part of the 50S ribosomal subunit.

Binds directly to 23S rRNA. Probably involved in E site tRNA release. Its function is as follows. Protein L1 is also a translational repressor protein, it controls the translation of its operon by binding to its mRNA. This Methanosarcina mazei (strain ATCC BAA-159 / DSM 3647 / Goe1 / Go1 / JCM 11833 / OCM 88) (Methanosarcina frisia) protein is Large ribosomal subunit protein uL1.